Here is a 643-residue protein sequence, read N- to C-terminus: Threonine--tRNA ligase (643 aa).

Residues 1 to 61 form the TGS domain; sequence MIKITLKDGS…NEDSSLEICT (61 aa). A catalytic region spans residues 240-540; sequence DHNKLGRELG…LIEKYAGALP (301 aa). Residues Cys-335, His-386, and His-517 each coordinate Zn(2+).

It belongs to the class-II aminoacyl-tRNA synthetase family. In terms of assembly, homodimer. The cofactor is Zn(2+).

The protein resides in the cytoplasm. It carries out the reaction tRNA(Thr) + L-threonine + ATP = L-threonyl-tRNA(Thr) + AMP + diphosphate + H(+). In terms of biological role, catalyzes the attachment of threonine to tRNA(Thr) in a two-step reaction: L-threonine is first activated by ATP to form Thr-AMP and then transferred to the acceptor end of tRNA(Thr). Also edits incorrectly charged L-seryl-tRNA(Thr). In Clostridium perfringens (strain SM101 / Type A), this protein is Threonine--tRNA ligase.